The sequence spans 155 residues: Large ribosomal subunit protein uL13 (155 aa).

Belongs to the universal ribosomal protein uL13 family. Part of the 50S ribosomal subunit.

In terms of biological role, this protein is one of the early assembly proteins of the 50S ribosomal subunit, although it is not seen to bind rRNA by itself. It is important during the early stages of 50S assembly. The sequence is that of Large ribosomal subunit protein uL13 from Rickettsia rickettsii (strain Iowa).